We begin with the raw amino-acid sequence, 294 residues long: Polyketide transferase grgF (294 aa).

Residues cysteine 115, aspartate 240, and histidine 269 contribute to the active site.

This sequence belongs to the polyketide transferase af380 family. In terms of assembly, homodimer.

The protein operates within secondary metabolite biosynthesis. Its function is as follows. Polyketide transferase; part of the gene cluster that mediates the biosynthesis of gregatin A, a fungal polyketide featuring an alkylated furanone core. The PKS grgA synthesizes C11 and C4 polyketide chains in the presence and absence of the trans-enoyl reductase grgB, respectively. The polyketide transferase grgF is then responsible for the fusion of the two carbon chains to produce the furanone skeleton of gregatin A. GrgF first undergoes a conformational change to an open form, and the active site Cys-115 is acylated by the C11 chain. After the elimination of the phosphopantetheinyl chain, the second polyketide chain of four carbons long is delivered adjacent to the enzyme-bound C11 chain. The catalytic histidine, His-269, deprotonates a proton from C-2 of the long chain, and the resultant carbanion attacks the C-1 carbonyl of the crotonyl group to perform Claisen condensation, by which the phosphopantetheinyl chain is released. Eventually, hydrolysis of the thioester linkage probably by a His-269-activated water molecule completes the reaction to afford the grgF final product. Next, the cytochrome P450 monooxygenase grgG accepts the unstable grgF final product as substrate and performs the oxidative cyclization to furnish the gregatin scaffold and leads to the formation of desmethylgregatin A. Finally, the O-methyltransferase grgD methylates the carboxyl group of desmethylgregatin A to provide gregatin A. This Penicillium sp protein is Polyketide transferase grgF.